The chain runs to 291 residues: Nucleotide-binding protein Lm4b_02443 (291 aa).

Residue 13–20 participates in ATP binding; the sequence is GMSGAGKT. Position 63–66 (63–66) interacts with GTP; that stretch reads DLRG.

The protein belongs to the RapZ-like family.

Its function is as follows. Displays ATPase and GTPase activities. In Listeria monocytogenes serotype 4b (strain CLIP80459), this protein is Nucleotide-binding protein Lm4b_02443.